We begin with the raw amino-acid sequence, 360 residues long: AA9 family lytic polysaccharide monooxygenase A (360 aa).

Positions 1 to 19 are cleaved as a signal peptide; the sequence is MKTSFGLLALAAAAKLVNA. 2 residues coordinate Cu(2+): His20 and His102. The cysteines at positions 62 and 183 are disulfide-linked. His169 serves as a coordination point for O2. Cu(2+) is bound at residue Tyr180. Residues 254–293 are disordered; sequence TSAASASSTKAPATTAAPVQTESAKPATSTTQAAAPTTLV. One can recognise a CBM1 domain in the interval 322 to 358; it reads GVVKMYAQCGGMNYSGSTTCESGLTCKQWNPYYHQCV. Asn334 is a glycosylation site (N-linked (GlcNAc...) asparagine).

This sequence belongs to the polysaccharide monooxygenase AA9 family. The cofactor is Cu(2+).

It localises to the secreted. The catalysed reaction is [(1-&gt;4)-beta-D-glucosyl]n+m + reduced acceptor + O2 = 4-dehydro-beta-D-glucosyl-[(1-&gt;4)-beta-D-glucosyl]n-1 + [(1-&gt;4)-beta-D-glucosyl]m + acceptor + H2O.. In terms of biological role, lytic polysaccharide monooxygenase (LPMO) that depolymerizes crystalline and amorphous polysaccharides via the oxidation of scissile alpha- or beta-(1-4)-glycosidic bonds, yielding C4 oxidation products. Catalysis by LPMOs requires the reduction of the active-site copper from Cu(II) to Cu(I) by a reducing agent and H(2)O(2) or O(2) as a cosubstrate. The sequence is that of AA9 family lytic polysaccharide monooxygenase A (eglD) from Aspergillus terreus (strain NIH 2624 / FGSC A1156).